A 194-amino-acid chain; its full sequence is Peptide deformylase (194 aa).

Residues C105 and H147 each coordinate Fe cation. The active site involves E148. H151 serves as a coordination point for Fe cation.

It belongs to the polypeptide deformylase family. The cofactor is Fe(2+).

The catalysed reaction is N-terminal N-formyl-L-methionyl-[peptide] + H2O = N-terminal L-methionyl-[peptide] + formate. Functionally, removes the formyl group from the N-terminal Met of newly synthesized proteins. Requires at least a dipeptide for an efficient rate of reaction. N-terminal L-methionine is a prerequisite for activity but the enzyme has broad specificity at other positions. The polypeptide is Peptide deformylase (Flavobacterium psychrophilum (strain ATCC 49511 / DSM 21280 / CIP 103535 / JIP02/86)).